The chain runs to 278 residues: Elongation factor Ts (278 aa).

The interval 79–82 (TDFV) is involved in Mg(2+) ion dislocation from EF-Tu.

It belongs to the EF-Ts family.

It localises to the cytoplasm. In terms of biological role, associates with the EF-Tu.GDP complex and induces the exchange of GDP to GTP. It remains bound to the aminoacyl-tRNA.EF-Tu.GTP complex up to the GTP hydrolysis stage on the ribosome. The chain is Elongation factor Ts from Borrelia hermsii (strain HS1 / DAH).